The chain runs to 281 residues: NAD-dependent protein deacetylase 3 (281 aa).

Residues 1-281 form the Deacetylase sirtuin-type domain; that stretch reads MLDSPTLDLL…PWLAEQLITR (281 aa). NAD(+) is bound by residues 27–47 and 105–108; these read GAGISTASGIPDYRDKDGVRR and QNVD. The active-site Proton acceptor is the histidine 123. 4 residues coordinate Zn(2+): cysteine 131, cysteine 134, cysteine 182, and cysteine 185. Residues 223 to 225, 249 to 251, and cysteine 267 contribute to the NAD(+) site; these read GTS and NHG.

It belongs to the sirtuin family. Class II subfamily. Zn(2+) is required as a cofactor.

The protein resides in the cytoplasm. The catalysed reaction is N(6)-acetyl-L-lysyl-[protein] + NAD(+) + H2O = 2''-O-acetyl-ADP-D-ribose + nicotinamide + L-lysyl-[protein]. In terms of biological role, NAD-dependent protein deacetylase which modulates the activities of several enzymes which are inactive in their acetylated form. The sequence is that of NAD-dependent protein deacetylase 3 from Pseudomonas syringae pv. tomato (strain ATCC BAA-871 / DC3000).